Here is a 413-residue protein sequence, read N- to C-terminus: Arogenate dehydratase/prephenate dehydratase 6, chloroplastic (413 aa).

The transit peptide at methionine 1 to serine 44 directs the protein to the chloroplast. Positions arginine 117–arginine 294 constitute a Prephenate dehydratase domain. The ACT domain occupies serine 308–proline 399.

As to expression, expressed in roots, leaves, stems, flowers and siliques.

It is found in the plastid. It localises to the chloroplast stroma. The catalysed reaction is L-arogenate + H(+) = L-phenylalanine + CO2 + H2O. The enzyme catalyses prephenate + H(+) = 3-phenylpyruvate + CO2 + H2O. It participates in amino-acid biosynthesis; L-phenylalanine biosynthesis; L-phenylalanine from L-arogenate: step 1/1. It functions in the pathway amino-acid biosynthesis; L-phenylalanine biosynthesis; phenylpyruvate from prephenate: step 1/1. Its function is as follows. Converts the prephenate produced from the shikimate-chorismate pathway into phenylalanine. Dehydratase that uses arogenate and prephenate as substrates. Utilzes more efficiently arogenate than prephenate. The protein is Arogenate dehydratase/prephenate dehydratase 6, chloroplastic of Arabidopsis thaliana (Mouse-ear cress).